A 610-amino-acid chain; its full sequence is Elongation factor 4 (610 aa).

Positions 11–193 constitute a tr-type G domain; sequence ENIRNFSIIA…QIVEKVPAPS (183 aa). GTP-binding positions include 23-28 and 140-143; these read DHGKST and NKID.

This sequence belongs to the TRAFAC class translation factor GTPase superfamily. Classic translation factor GTPase family. LepA subfamily.

The protein localises to the cell membrane. The enzyme catalyses GTP + H2O = GDP + phosphate + H(+). Functionally, required for accurate and efficient protein synthesis under certain stress conditions. May act as a fidelity factor of the translation reaction, by catalyzing a one-codon backward translocation of tRNAs on improperly translocated ribosomes. Back-translocation proceeds from a post-translocation (POST) complex to a pre-translocation (PRE) complex, thus giving elongation factor G a second chance to translocate the tRNAs correctly. Binds to ribosomes in a GTP-dependent manner. In Streptococcus equi subsp. zooepidemicus (strain MGCS10565), this protein is Elongation factor 4.